The chain runs to 175 residues: Tumor necrosis factor receptor superfamily member 13C (175 aa).

Over 1–71 (MGARRLRVRS…EGSALRPDVA (71 aa)) the chain is Extracellular. The TNFR-Cys; truncated repeat unit spans residues 21-38 (QCNQTECFDPLVRNCVSC). Disulfide bonds link cysteine 22/cysteine 35 and cysteine 27/cysteine 38. Residue asparagine 23 is glycosylated (N-linked (GlcNAc...) asparagine). The tract at residues 29-34 (DPLVRN) is essential for TNFSF13B/TALL1/BAFF/BLyS binding. The helical; Signal-anchor for type III membrane protein transmembrane segment at 72–92 (LLVGAPALLGLILALTLVGLV) threads the bilayer. Residues 93–175 (SLVSWRWRQQ…VTTKTAGPEQ (83 aa)) are Cytoplasmic-facing. The disordered stretch occupies residues 124-175 (VPSSETPHASAPTWPPLKEDADSALPRHSVPVPATELGSTELVTTKTAGPEQ). Polar residues predominate over residues 160–175 (LGSTELVTTKTAGPEQ).

In terms of tissue distribution, highly expressed in spleen and testis; detected at lower levels in lung and thymus.

The protein resides in the membrane. Functionally, B-cell receptor specific for TNFSF13B/TALL1/BAFF/BLyS. Promotes the survival of mature B-cells and the B-cell response. This is Tumor necrosis factor receptor superfamily member 13C (Tnfrsf13c) from Mus musculus (Mouse).